A 921-amino-acid chain; its full sequence is Isoleucine--tRNA ligase (921 aa).

A 'HIGH' region motif is present at residues 57-67 (PYANGDIHMGH). Glutamate 552 is a binding site for L-isoleucyl-5'-AMP. Positions 593 to 597 (KMSKS) match the 'KMSKS' region motif. Residue lysine 596 participates in ATP binding. The Zn(2+) site is built by cysteine 888, cysteine 891, cysteine 908, and cysteine 911.

It belongs to the class-I aminoacyl-tRNA synthetase family. IleS type 1 subfamily. In terms of assembly, monomer. Requires Zn(2+) as cofactor.

It is found in the cytoplasm. It carries out the reaction tRNA(Ile) + L-isoleucine + ATP = L-isoleucyl-tRNA(Ile) + AMP + diphosphate. Catalyzes the attachment of isoleucine to tRNA(Ile). As IleRS can inadvertently accommodate and process structurally similar amino acids such as valine, to avoid such errors it has two additional distinct tRNA(Ile)-dependent editing activities. One activity is designated as 'pretransfer' editing and involves the hydrolysis of activated Val-AMP. The other activity is designated 'posttransfer' editing and involves deacylation of mischarged Val-tRNA(Ile). The polypeptide is Isoleucine--tRNA ligase (Bacillus anthracis (strain A0248)).